The chain runs to 149 residues: Large ribosomal subunit protein bL9 (149 aa).

It belongs to the bacterial ribosomal protein bL9 family.

In terms of biological role, binds to the 23S rRNA. This is Large ribosomal subunit protein bL9 from Clostridioides difficile (strain 630) (Peptoclostridium difficile).